Reading from the N-terminus, the 323-residue chain is D-alanine--D-alanine ligase (323 aa).

The region spanning 120–319 (LSVLKPYGIK…LEDLFTNAIE (200 aa)) is the ATP-grasp domain. 148 to 203 (VKKVGLPCFVKPNKAGSSFGISKVKSEAELPIAIEVAYKEDNEIIIESFLDGTEVS) lines the ATP pocket. Mg(2+) is bound by residues E274, E286, and N288.

The protein belongs to the D-alanine--D-alanine ligase family. Requires Mg(2+) as cofactor. The cofactor is Mn(2+).

Its subcellular location is the cytoplasm. It catalyses the reaction 2 D-alanine + ATP = D-alanyl-D-alanine + ADP + phosphate + H(+). Its pathway is cell wall biogenesis; peptidoglycan biosynthesis. Cell wall formation. The sequence is that of D-alanine--D-alanine ligase from Flavobacterium johnsoniae (strain ATCC 17061 / DSM 2064 / JCM 8514 / BCRC 14874 / CCUG 350202 / NBRC 14942 / NCIMB 11054 / UW101) (Cytophaga johnsonae).